The following is a 287-amino-acid chain: Inorganic pyrophosphatase (287 aa).

R79 is a diphosphate binding site. Mg(2+)-binding residues include D116, D121, and D153. Residues 244-258 (NSTLGNSDSVDSSKL) are compositionally biased toward polar residues. The interval 244 to 269 (NSTLGNSDSVDSSKLASIPRGENLPP) is disordered.

The protein belongs to the PPase family. Mg(2+) serves as cofactor.

It is found in the cytoplasm. The catalysed reaction is diphosphate + H2O = 2 phosphate + H(+). Its function is as follows. Involved in osmoadaptation. The chain is Inorganic pyrophosphatase (ipp1) from Emericella nidulans (strain FGSC A4 / ATCC 38163 / CBS 112.46 / NRRL 194 / M139) (Aspergillus nidulans).